The chain runs to 62 residues: Zinc finger-containing protein P28b (62 aa).

The RING-type; degenerate zinc-finger motif lies at 1-46; it reads MKLFTQNDRYFGLLDSCTHIFCITCINIWHKTRRETGASDNCPICR.

The protein is Zinc finger-containing protein P28b of Vaccinia virus (strain Western Reserve) (VACV).